A 152-amino-acid polypeptide reads, in one-letter code: Early glycoprotein GP48 (152 aa).

The first 25 residues, 1–25, serve as a signal peptide directing secretion; the sequence is MVMMLRTWRLLPMVLLAAYCYCVFG. 9 N-linked (GlcNAc...) asparagine; by host glycosylation sites follow: asparagine 48, asparagine 53, asparagine 61, asparagine 69, asparagine 108, asparagine 112, asparagine 122, asparagine 139, and asparagine 148.

It belongs to the RL11 family. In terms of processing, N-glycosylated and possibly O-glycosylated.

It localises to the virion membrane. The polypeptide is Early glycoprotein GP48 (UL4) (Homo sapiens (Human)).